The chain runs to 412 residues: Multifunctional CCA protein (412 aa).

Positions 8 and 11 each coordinate ATP. Positions 8 and 11 each coordinate CTP. Residues aspartate 21 and aspartate 23 each coordinate Mg(2+). The ATP site is built by arginine 91, arginine 137, and arginine 140. The CTP site is built by arginine 91, arginine 137, and arginine 140. The HD domain maps to 228–329 (TGIHTLMTLS…VKLFDSIDAW (102 aa)).

This sequence belongs to the tRNA nucleotidyltransferase/poly(A) polymerase family. Bacterial CCA-adding enzyme type 1 subfamily. As to quaternary structure, monomer. Can also form homodimers and oligomers. It depends on Mg(2+) as a cofactor. Ni(2+) serves as cofactor.

It carries out the reaction a tRNA precursor + 2 CTP + ATP = a tRNA with a 3' CCA end + 3 diphosphate. The catalysed reaction is a tRNA with a 3' CCA end + 2 CTP + ATP = a tRNA with a 3' CCACCA end + 3 diphosphate. Catalyzes the addition and repair of the essential 3'-terminal CCA sequence in tRNAs without using a nucleic acid template. Adds these three nucleotides in the order of C, C, and A to the tRNA nucleotide-73, using CTP and ATP as substrates and producing inorganic pyrophosphate. tRNA 3'-terminal CCA addition is required both for tRNA processing and repair. Also involved in tRNA surveillance by mediating tandem CCA addition to generate a CCACCA at the 3' terminus of unstable tRNAs. While stable tRNAs receive only 3'-terminal CCA, unstable tRNAs are marked with CCACCA and rapidly degraded. The chain is Multifunctional CCA protein from Escherichia coli O157:H7.